Reading from the N-terminus, the 150-residue chain is Galectin-1 (150 aa).

Residues 9–141 enclose the Galectin domain; it reads NQIKLQDDFK…FSSPVTVDIH (133 aa). Residues His-51, Arg-55, Asn-64, and Glu-75 each contribute to the a carbohydrate site.

As to quaternary structure, homotetramer. Oligomerization is required for carbohydrate binding. In terms of tissue distribution, most abundant in fruiting bodies. Very low levels of expression in asexual vegetative mycelia.

It localises to the secreted. The protein localises to the extracellular space. Its subcellular location is the extracellular matrix. It is found in the cell wall. The protein resides in the endomembrane system. Binds lactose. May play a role in fruiting body formation. In Coprinopsis cinerea (strain Okayama-7 / 130 / ATCC MYA-4618 / FGSC 9003) (Inky cap fungus), this protein is Galectin-1 (Cgl1).